The sequence spans 475 residues: MNLETIIGLEVHVELKTNSKIFSASPTEFGAEPNTQTSVIDLGYPGVLPTLNKEAVNFAMKAAMALNCEIATETKFDRKNYFYPDNPKAYQISQFDKPIGENGWIEIEVDGKKKRIGITRLHLEEDAGKSTHAADGSLVDYNRQGMPLIEIVSEPDMRTPEEAYAYLEKLKSIIQYTGVSDCKMEEGSLRCDANISLRPVGQEKFGTKAELKNLNSFTYVQKGLEHEQVRQEKELLSGGIIQQETRRYDEATKKTILMRIKEGSDDYRYFPEPDLVELYIDDEWKEEIRASIPELPDARKARYVEEVGLPAYDAHVLTLTKEMSDFFEATVADGADAKLTSNWLMGEVLAYLNKQQKELKDVALTPAGLAKMVQLIEKGTISSKIAKKVFNELIEKGGDPEEIVKAKGLVQISDEGTLRKVVTEILDNNEQSIEDFKNGKDRAIGFLVGQIMKATKGQANPPLVNKILLEEINKR.

It belongs to the GatB/GatE family. GatB subfamily. In terms of assembly, heterotrimer of A, B and C subunits.

The catalysed reaction is L-glutamyl-tRNA(Gln) + L-glutamine + ATP + H2O = L-glutaminyl-tRNA(Gln) + L-glutamate + ADP + phosphate + H(+). The enzyme catalyses L-aspartyl-tRNA(Asn) + L-glutamine + ATP + H2O = L-asparaginyl-tRNA(Asn) + L-glutamate + ADP + phosphate + 2 H(+). Its function is as follows. Allows the formation of correctly charged Asn-tRNA(Asn) or Gln-tRNA(Gln) through the transamidation of misacylated Asp-tRNA(Asn) or Glu-tRNA(Gln) in organisms which lack either or both of asparaginyl-tRNA or glutaminyl-tRNA synthetases. The reaction takes place in the presence of glutamine and ATP through an activated phospho-Asp-tRNA(Asn) or phospho-Glu-tRNA(Gln). The protein is Aspartyl/glutamyl-tRNA(Asn/Gln) amidotransferase subunit B of Bacillus mycoides (strain KBAB4) (Bacillus weihenstephanensis).